A 1342-amino-acid chain; its full sequence is DNA-directed RNA polymerase subunit beta (1342 aa).

The protein belongs to the RNA polymerase beta chain family. In terms of assembly, the RNAP catalytic core consists of 2 alpha, 1 beta, 1 beta' and 1 omega subunit. When a sigma factor is associated with the core the holoenzyme is formed, which can initiate transcription.

It carries out the reaction RNA(n) + a ribonucleoside 5'-triphosphate = RNA(n+1) + diphosphate. Functionally, DNA-dependent RNA polymerase catalyzes the transcription of DNA into RNA using the four ribonucleoside triphosphates as substrates. This is DNA-directed RNA polymerase subunit beta from Salmonella choleraesuis (strain SC-B67).